The primary structure comprises 435 residues: 3-ketoacyl-CoA thiolase (435 aa).

C98 functions as the Acyl-thioester intermediate in the catalytic mechanism. Active-site proton acceptor residues include H391 and C421.

The protein belongs to the thiolase-like superfamily. Thiolase family. Heterotetramer of two alpha chains (FadJ) and two beta chains (FadI).

Its subcellular location is the cytoplasm. The catalysed reaction is an acyl-CoA + acetyl-CoA = a 3-oxoacyl-CoA + CoA. It functions in the pathway lipid metabolism; fatty acid beta-oxidation. Functionally, catalyzes the final step of fatty acid oxidation in which acetyl-CoA is released and the CoA ester of a fatty acid two carbons shorter is formed. In Colwellia psychrerythraea (strain 34H / ATCC BAA-681) (Vibrio psychroerythus), this protein is 3-ketoacyl-CoA thiolase.